The following is a 411-amino-acid chain: Putative binding protein BRA0748/BS1330_II0741 (411 aa).

An N-terminal signal peptide occupies residues 1-25; the sequence is MLIRKWKAGLLAGLSILALASSADA.

This sequence belongs to the bacterial solute-binding protein 1 family. In terms of assembly, the complex is composed of two ATP-binding proteins (BRA0745), two transmembrane proteins (BRA0749) and a solute-binding protein (BRA0748).

The protein localises to the periplasm. Probably part of an ABC transporter complex. The sequence is that of Putative binding protein BRA0748/BS1330_II0741 from Brucella suis biovar 1 (strain 1330).